The primary structure comprises 1238 residues: Virulence sensor protein BvgS (1238 aa).

A signal peptide spans 1–32 (MPAPHRLYPRSLICLAQALLVWALLAWAPAQA). The Cytoplasmic segment spans residues 33–307 (SQELTLVGKA…REQQWMANHP (275 aa)). Residues 308–331 (VVKVAVLNLFAPFTLFRTDEQFGG) traverse the membrane as a helical segment. Over 332–541 (ISAAVLQLLQ…PRTWYAYRNE (210 aa)) the chain is Periplasmic. A helical transmembrane segment spans residues 542–563 (IYLLIGLGLLSALLFLSWIVYL). The Cytoplasmic portion of the chain corresponds to 564-1238 (RRQIRQRKRA…LEQRPHQGQP (675 aa)). The PAS domain maps to 580–651 (QLEFMRVLID…MHEFLLTRMA (72 aa)). The PAC domain maps to 652–708 (AEREPRFEDRDVTLHGRTRHVYQWTVPYGDSLGELKGIIGGWIDITERAELLRELHD). Residues 726–948 (TMSHEIRTPM…TVSVDLRLTM (223 aa)) enclose the Histidine kinase domain. His729 is modified (phosphohistidine; by autocatalysis). The region spanning 974–1095 (RVLVVDDHKP…ALRQRLNEAA (122 aa)) is the Response regulatory domain. Asp1023 is modified (4-aspartylphosphate). One can recognise an HPt domain in the interval 1133–1228 (DEALIRQLLE…AALETQLRAW (96 aa)). Phosphohistidine is present on His1172.

In terms of processing, activation requires a sequential transfer of a phosphate group from a His in the primary transmitter domain, to an Asp in the receiver domain and to a His in the secondary transmitter domain.

Its subcellular location is the cell inner membrane. The catalysed reaction is ATP + protein L-histidine = ADP + protein N-phospho-L-histidine.. Its function is as follows. Member of the two-component regulatory system BvgS/BvgA. Phosphorylates BvgA via a four-step phosphorelay in response to environmental signals. This is Virulence sensor protein BvgS (bvgS) from Bordetella parapertussis (strain 12822 / ATCC BAA-587 / NCTC 13253).